We begin with the raw amino-acid sequence, 192 residues long: tRNA (pseudouridine(54)-N(1))-methyltransferase (192 aa).

S-adenosyl-L-methionine contacts are provided by L127 and C181.

The protein belongs to the methyltransferase superfamily. TrmY family. As to quaternary structure, homodimer.

The protein localises to the cytoplasm. The catalysed reaction is pseudouridine(54) in tRNA + S-adenosyl-L-methionine = N(1)-methylpseudouridine(54) in tRNA + S-adenosyl-L-homocysteine + H(+). Its function is as follows. Specifically catalyzes the N1-methylation of pseudouridine at position 54 (Psi54) in tRNAs. The polypeptide is tRNA (pseudouridine(54)-N(1))-methyltransferase (Methanocella arvoryzae (strain DSM 22066 / NBRC 105507 / MRE50)).